A 29-amino-acid chain; its full sequence is Dermaseptin-J5 (29 aa).

A Valine amide modification is found at valine 29.

In terms of tissue distribution, expressed by the skin glands.

It is found in the secreted. Its function is as follows. Has antimicrobial activity. The chain is Dermaseptin-J5 from Phasmahyla jandaia (Jandaia leaf frog).